The primary structure comprises 79 residues: CDC42 small effector protein 1 (79 aa).

Residues C10 and C11 are each lipidated (S-palmitoyl cysteine). The 14-residue stretch at I30–G43 folds into the CRIB domain. The segment at G48 to L79 is disordered. The span at M63–P72 shows a compositional bias: basic and acidic residues.

The protein belongs to the CDC42SE/SPEC family. Interacts with CDC42 (in GTP-bound form). Interacts weakly with RAC1 and not at all with RHOA.

Its subcellular location is the cytoplasm. The protein resides in the cytoskeleton. The protein localises to the cell membrane. Functionally, probably involved in the organization of the actin cytoskeleton by acting downstream of CDC42, inducing actin filament assembly. Alters CDC42-induced cell shape changes. In activated T-cells, may play a role in CDC42-mediated F-actin accumulation at the immunological synapse. May play a role in early contractile events in phagocytosis in macrophages. The protein is CDC42 small effector protein 1 (CDC42SE1) of Bos taurus (Bovine).